Consider the following 129-residue polypeptide: Glycine cleavage system H protein (129 aa).

One can recognise a Lipoyl-binding domain in the interval 24–106 (LVRVGLSAYA…HGEGWLLVIR (83 aa)). Lys65 bears the N6-lipoyllysine mark.

This sequence belongs to the GcvH family. As to quaternary structure, the glycine cleavage system is composed of four proteins: P, T, L and H. The cofactor is (R)-lipoate.

Its function is as follows. The glycine cleavage system catalyzes the degradation of glycine. The H protein shuttles the methylamine group of glycine from the P protein to the T protein. The protein is Glycine cleavage system H protein of Synechococcus sp. (strain CC9311).